A 38-amino-acid chain; its full sequence is Large ribosomal subunit protein bL36 (38 aa).

Belongs to the bacterial ribosomal protein bL36 family.

This chain is Large ribosomal subunit protein bL36, found in Prochlorococcus marinus (strain SARG / CCMP1375 / SS120).